A 746-amino-acid polypeptide reads, in one-letter code: UvrABC system protein C (746 aa).

The GIY-YIG domain maps to 18-97 (AKPGVYKWRD…IKEFDPRFNV (80 aa)). The UVR domain occupies 211–246 (RPYIAQLTRDMKEASAELEFEKAARLRDQIQMLETV). A disordered region spans residues 557–577 (ANGNDNGEGGSDISGKGHAVP).

It belongs to the UvrC family. In terms of assembly, interacts with UvrB in an incision complex.

Its subcellular location is the cytoplasm. Functionally, the UvrABC repair system catalyzes the recognition and processing of DNA lesions. UvrC both incises the 5' and 3' sides of the lesion. The N-terminal half is responsible for the 3' incision and the C-terminal half is responsible for the 5' incision. The sequence is that of UvrABC system protein C from Bifidobacterium longum (strain NCC 2705).